Consider the following 161-residue polypeptide: Thy-1 membrane glycoprotein (161 aa).

Positions 1–19 (MNPVISITLLLSVLQMSRG) are cleaved as a signal peptide. Q20 carries the post-translational modification Pyrrolidone carboxylic acid. One can recognise an Ig-like V-type domain in the interval 20–126 (QRVISLTACL…NKTINVIRDK (107 aa)). 2 disulfide bridges follow: C28–C130 and C38–C104. Residue N42 is glycosylated (N-linked (GlcNAc...) (complex) asparagine; alternate). An N-linked (GlcNAc...) (high mannose) asparagine; alternate glycan is attached at N42. The N-linked (GlcNAc...) asparagine; alternate glycan is linked to N42. S82 bears the Phosphoserine mark. N-linked (GlcNAc...) (complex) asparagine; alternate glycosylation occurs at N93. A glycan (N-linked (GlcNAc...) asparagine; alternate) is linked at N93. N-linked (GlcNAc...) (high mannose) asparagine; in brain; alternate glycosylation occurs at N117. N117 carries N-linked (GlcNAc...) (hybrid) asparagine; in brain; alternate glycosylation. A lipid anchor (GPI-anchor amidated cysteine) is attached at C130. A propeptide spans 131 to 161 (GGISLLVQNTSWLLLLLLSLSFLQATDFISL) (removed in mature form).

Glycosylation is tissue specific. Sialylation of N-glycans at Asn-93 in brain and at Asn-42, Asn-93 and Asn-117 in thymus. As to expression, abundant in lymphoid tissues.

Its subcellular location is the cell membrane. Functionally, may play a role in cell-cell or cell-ligand interactions during synaptogenesis and other events in the brain. This chain is Thy-1 membrane glycoprotein (Thy1), found in Rattus norvegicus (Rat).